The primary structure comprises 875 residues: E3 SUMO-protein ligase SIZ1 (875 aa).

The SAP domain maps to 12-46; that stretch reads LAYFRIKELKDILNQLGLPKQGKKQDLIDRVLALL. Residues 114–169 form a PHD-type zinc finger; the sequence is KVRCICSSTMVNDSMIQCEDQRCQVWQHLNCVLIPDKPGESAEVPPVFYCELCRLS. The SP-RING-type zinc-finger motif lies at 349–430; it reads SDLEVVAESV…FNRITSLLRN (82 aa). Cys380, His382, Cys403, and Cys406 together coordinate Zn(2+). A disordered region spans residues 796 to 820; the sequence is GGGGNEEPAPADVNSQPQIPSTETG. The span at 808-819 shows a compositional bias: polar residues; sequence VNSQPQIPSTET.

This sequence belongs to the PIAS family.

Its subcellular location is the nucleus. It participates in protein modification; protein sumoylation. Functionally, probable SUMO E3 ligase that may regulate Pi starvation responses. In Oryza sativa subsp. japonica (Rice), this protein is E3 SUMO-protein ligase SIZ1 (SIZ1).